We begin with the raw amino-acid sequence, 161 residues long: Ribosomal RNA large subunit methyltransferase H (161 aa).

S-adenosyl-L-methionine contacts are provided by residues Leu-78, Gly-110, and 129-134 (LSRLTF).

The protein belongs to the RNA methyltransferase RlmH family. In terms of assembly, homodimer.

Its subcellular location is the cytoplasm. It catalyses the reaction pseudouridine(1915) in 23S rRNA + S-adenosyl-L-methionine = N(3)-methylpseudouridine(1915) in 23S rRNA + S-adenosyl-L-homocysteine + H(+). Its function is as follows. Specifically methylates the pseudouridine at position 1915 (m3Psi1915) in 23S rRNA. The chain is Ribosomal RNA large subunit methyltransferase H from Heliobacterium modesticaldum (strain ATCC 51547 / Ice1).